We begin with the raw amino-acid sequence, 626 residues long: Chaperone protein HtpG (626 aa).

An a; substrate-binding region spans residues Met1–Arg331. Residues Glu332–Arg544 are b. The c stretch occupies residues Leu545–Ala626.

This sequence belongs to the heat shock protein 90 family. Homodimer.

The protein resides in the cytoplasm. Molecular chaperone. Has ATPase activity. This is Chaperone protein HtpG from Methylorubrum populi (strain ATCC BAA-705 / NCIMB 13946 / BJ001) (Methylobacterium populi).